Consider the following 229-residue polypeptide: Orotate phosphoribosyltransferase (229 aa).

Residues arginine 107, lysine 108, lysine 111, histidine 113, and 133 to 141 (EDLTTAGGS) contribute to the 5-phospho-alpha-D-ribose 1-diphosphate site. Threonine 137 contributes to the orotate binding site.

The protein belongs to the purine/pyrimidine phosphoribosyltransferase family. PyrE subfamily. Homodimer. Mg(2+) is required as a cofactor.

The enzyme catalyses orotidine 5'-phosphate + diphosphate = orotate + 5-phospho-alpha-D-ribose 1-diphosphate. It functions in the pathway pyrimidine metabolism; UMP biosynthesis via de novo pathway; UMP from orotate: step 1/2. In terms of biological role, catalyzes the transfer of a ribosyl phosphate group from 5-phosphoribose 1-diphosphate to orotate, leading to the formation of orotidine monophosphate (OMP). The protein is Orotate phosphoribosyltransferase of Rhizobium etli (strain CIAT 652).